The following is a 361-amino-acid chain: MSKFSFNIHHQHKKARSGIIVTAHGEMRTPAFMPVGTRGTVKAMLPESVAETGADILLGNTYHLMLQPTAERIVLLGGLHKFMNWDKPILTDSGGFQVMSLSKLRKITEEGVSFSSHINGDKYMLTPERSTEIQYLLGSTITMAFDECTPYPATFEEAKTSMQLTTRWANRSRNAFVKREGYAQFGIIQGSVYEELREQSAKDLVELDFEGYAIGGLAVGEGQELMFKVLDYAPDFLPQNKPRYLMGVGKPADIIGAVSRGIDMFDCVIPTRAGRNGQAFTKYGTVNIRNSKYADDNKPLEHDCLCPACRNYSKAYLHHLVRIGEILGSMLMTWHNLTYFQNLMSRIREYIKLGKDFDFDS.

The active-site Proton acceptor is the Asp92. Substrate-binding positions include 92 to 96 (DSGGF), Asp146, Gln189, and Gly216. The interval 247–253 (GVGKPAD) is RNA binding. Asp266 serves as the catalytic Nucleophile. Residues 271 to 275 (TRAGR) form an RNA binding; important for wobble base 34 recognition region. Positions 304, 306, 309, and 335 each coordinate Zn(2+).

Belongs to the queuine tRNA-ribosyltransferase family. In terms of assembly, homodimer. Within each dimer, one monomer is responsible for RNA recognition and catalysis, while the other monomer binds to the replacement base PreQ1. It depends on Zn(2+) as a cofactor.

It carries out the reaction 7-aminomethyl-7-carbaguanine + guanosine(34) in tRNA = 7-aminomethyl-7-carbaguanosine(34) in tRNA + guanine. Its pathway is tRNA modification; tRNA-queuosine biosynthesis. Catalyzes the base-exchange of a guanine (G) residue with the queuine precursor 7-aminomethyl-7-deazaguanine (PreQ1) at position 34 (anticodon wobble position) in tRNAs with GU(N) anticodons (tRNA-Asp, -Asn, -His and -Tyr). Catalysis occurs through a double-displacement mechanism. The nucleophile active site attacks the C1' of nucleotide 34 to detach the guanine base from the RNA, forming a covalent enzyme-RNA intermediate. The proton acceptor active site deprotonates the incoming PreQ1, allowing a nucleophilic attack on the C1' of the ribose to form the product. After dissociation, two additional enzymatic reactions on the tRNA convert PreQ1 to queuine (Q), resulting in the hypermodified nucleoside queuosine (7-(((4,5-cis-dihydroxy-2-cyclopenten-1-yl)amino)methyl)-7-deazaguanosine). This is Queuine tRNA-ribosyltransferase from Rickettsia massiliae (strain Mtu5).